A 178-amino-acid polypeptide reads, in one-letter code: Ribosome maturation factor RimM (178 aa).

Positions 95–174 constitute a PRC barrel domain; it reads EGQHFWFNVI…IVHVKDAKDI (80 aa).

Belongs to the RimM family. Binds ribosomal protein uS19.

It is found in the cytoplasm. Functionally, an accessory protein needed during the final step in the assembly of 30S ribosomal subunit, possibly for assembly of the head region. Essential for efficient processing of 16S rRNA. May be needed both before and after RbfA during the maturation of 16S rRNA. It has affinity for free ribosomal 30S subunits but not for 70S ribosomes. The polypeptide is Ribosome maturation factor RimM (Sulfurovum sp. (strain NBC37-1)).